Reading from the N-terminus, the 176-residue chain is Translation initiation factor IF-3 (176 aa).

Belongs to the IF-3 family. In terms of assembly, monomer.

It is found in the cytoplasm. Its function is as follows. IF-3 binds to the 30S ribosomal subunit and shifts the equilibrium between 70S ribosomes and their 50S and 30S subunits in favor of the free subunits, thus enhancing the availability of 30S subunits on which protein synthesis initiation begins. In Streptococcus uberis (strain ATCC BAA-854 / 0140J), this protein is Translation initiation factor IF-3.